A 199-amino-acid chain; its full sequence is MANMAVSRIKREFKEVMRSEEIVQCSIKIELVNDSWTELRGEIAGPPDTPYEGGKFVLEIKVPETYPFNPPKVRFITRIWHPNISSVTGAICLDILKDNWAAAMTLRTVLLSLQALLAAAEPDDPQDAVVAYQFKDKYDLFLLTAKHWTNAYAGGPHTFPDCDSKIQRLRDMGIDEHEARAVLSKENWNLEKATEGLFS.

Residues 4–154 enclose the UBC core domain; it reads MAVSRIKREF…AKHWTNAYAG (151 aa). Cysteine 92 (glycyl thioester intermediate) is an active-site residue. Residues 161–199 enclose the UBA domain; it reads DCDSKIQRLRDMGIDEHEARAVLSKENWNLEKATEGLFS.

It belongs to the ubiquitin-conjugating enzyme family. Interacts with Rpn10. As to expression, during gastrulation, expression is highest in the invaginating posterior midgut primordium (PMG), high expression is also observed in the cephalic furrow and ventral ectodermal neurogenic region. In stage 10-11 embryos, expression is high in the pole cells present in the pocket formed by the PMG. During germ band retraction, expression appears to reinitiate in many tissues, especially the gut and nervous system. After dorsal closure, expression is detectable at low levels throughout the embryo.

It carries out the reaction S-ubiquitinyl-[E1 ubiquitin-activating enzyme]-L-cysteine + [E2 ubiquitin-conjugating enzyme]-L-cysteine = [E1 ubiquitin-activating enzyme]-L-cysteine + S-ubiquitinyl-[E2 ubiquitin-conjugating enzyme]-L-cysteine.. It functions in the pathway protein modification; protein ubiquitination. Its function is as follows. Catalyzes the covalent attachment of ubiquitin to other proteins. This is Ubiquitin-conjugating enzyme E2-22 kDa from Drosophila melanogaster (Fruit fly).